A 65-amino-acid chain; its full sequence is MFLSAVFFAKSKSKNILVRMVSEAGTGFCFNTKRNRLREKLTLLHYDPVVKQRVLFVEKKKIRSL.

The transit peptide at 1-8 directs the protein to the mitochondrion; sequence MFLSAVFF.

The protein belongs to the bacterial ribosomal protein bL33 family. As to quaternary structure, component of the mitochondrial large ribosomal subunit (mt-LSU). Mature mammalian 55S mitochondrial ribosomes consist of a small (28S) and a large (39S) subunit. The 28S small subunit contains a 12S ribosomal RNA (12S mt-rRNA) and 30 different proteins. The 39S large subunit contains a 16S rRNA (16S mt-rRNA), a copy of mitochondrial valine transfer RNA (mt-tRNA(Val)), which plays an integral structural role, and 52 different proteins.

The protein resides in the mitochondrion. The protein is Large ribosomal subunit protein bL33m (MRPL33) of Homo sapiens (Human).